The following is a 522-amino-acid chain: Subtilisin-like protease 10 (522 aa).

The signal sequence occupies residues 1–19 (MFFFKGVVAVLSFFSAVNA). Positions 20–117 (APFMKPNNGT…VERDQIGTSQ (98 aa)) are excised as a propeptide. Residues 36 to 113 (SYIVLLKRDI…HVAHVERDQI (78 aa)) form the Inhibitor I9 domain. One can recognise a Peptidase S8 domain in the interval 127–405 (NWGLGRLSNN…KLLVNGANGT (279 aa)). Active-site charge relay system residues include D159 and H190. The N-linked (GlcNAc...) asparagine glycan is linked to N251. Residue S348 is the Charge relay system of the active site. Polar residues predominate over residues 384–397 (ASVKNPGPNTTNKL). The interval 384-515 (ASVKNPGPNT…GWNRPMWWNR (132 aa)) is disordered. N-linked (GlcNAc...) asparagine glycans are attached at residues N392 and N403. Over residues 432–459 (SQNPPPGQNPPPGQNPPPEQPAPSPPAN) the composition is skewed to pro residues.

The protein belongs to the peptidase S8 family.

It is found in the secreted. Functionally, secreted subtilisin-like serine protease with keratinolytic activity that contributes to pathogenicity. The polypeptide is Subtilisin-like protease 10 (SUB10) (Arthroderma benhamiae (strain ATCC MYA-4681 / CBS 112371) (Trichophyton mentagrophytes)).